We begin with the raw amino-acid sequence, 639 residues long: Probable potassium transport system protein Kup 1 (639 aa).

12 helical membrane-spanning segments follow: residues alanine 27–phenylalanine 47, valine 64–isoleucine 84, valine 115–proline 135, proline 151–isoleucine 171, phenylalanine 182–isoleucine 202, glycine 225–leucine 245, tryptophan 261–leucine 281, leucine 293–isoleucine 313, isoleucine 351–phenylalanine 371, leucine 377–phenylalanine 397, isoleucine 408–alanine 428, and leucine 430–isoleucine 450.

Belongs to the HAK/KUP transporter (TC 2.A.72) family.

The protein resides in the cell inner membrane. It catalyses the reaction K(+)(in) + H(+)(in) = K(+)(out) + H(+)(out). Transport of potassium into the cell. Likely operates as a K(+):H(+) symporter. The polypeptide is Probable potassium transport system protein Kup 1 (Agrobacterium fabrum (strain C58 / ATCC 33970) (Agrobacterium tumefaciens (strain C58))).